The following is a 204-amino-acid chain: Thymidylate kinase (204 aa).

7-14 lines the ATP pocket; sequence GGEGVGKT.

It belongs to the thymidylate kinase family.

It carries out the reaction dTMP + ATP = dTDP + ADP. Phosphorylation of dTMP to form dTDP in both de novo and salvage pathways of dTTP synthesis. This chain is Thymidylate kinase, found in Synechococcus sp. (strain JA-3-3Ab) (Cyanobacteria bacterium Yellowstone A-Prime).